The primary structure comprises 238 residues: Sugar fermentation stimulation protein homolog (238 aa).

It belongs to the SfsA family.

In Actinobacillus succinogenes (strain ATCC 55618 / DSM 22257 / CCUG 43843 / 130Z), this protein is Sugar fermentation stimulation protein homolog.